A 202-amino-acid polypeptide reads, in one-letter code: Ribonuclease HII (202 aa).

One can recognise an RNase H type-2 domain in the interval 11 to 200 (GLIAGVDEVG…VRKAIEEFNR (190 aa)). 3 residues coordinate a divalent metal cation: Asp-17, Glu-18, and Asp-109.

It belongs to the RNase HII family. It depends on Mn(2+) as a cofactor. Mg(2+) serves as cofactor.

It localises to the cytoplasm. The enzyme catalyses Endonucleolytic cleavage to 5'-phosphomonoester.. Its function is as follows. Endonuclease that specifically degrades the RNA of RNA-DNA hybrids. The protein is Ribonuclease HII of Actinobacillus succinogenes (strain ATCC 55618 / DSM 22257 / CCUG 43843 / 130Z).